Here is a 1052-residue protein sequence, read N- to C-terminus: Protein argonaute 14 (1052 aa).

The span at 1–39 shows a compositional bias: gly residues; sequence MASRGGDGLVGGGRGPLGGRDGRGRGPAGGRGGGRGGGH. Disordered regions lie at residues 1–127 and 170–194; these read MASR…TPAV and GGRP…APPS. Positions 40–49 are enriched in low complexity; the sequence is PQQQQQQQPG. Composition is skewed to gly residues over residues 50–59 and 66–81; these read YGRGDGGGRG and GVVG…GGRG. Over residues 97–117 the composition is skewed to low complexity; the sequence is VRPAMAAAPAASTPGPVAVAA. Pro residues predominate over residues 173-183; sequence PAPPAAPPAPI. A PAZ domain is found at 394-510; sequence SVVEYVKNCL…LPMEVCTIVE (117 aa). The region spanning 677-1009 is the Piwi domain; sequence LLIVILPDVN…AAFRARYYDE (333 aa).

It belongs to the argonaute family. Ago subfamily. In terms of tissue distribution, expressed in seeds.

Its function is as follows. Probably involved in the RNA silencing pathway. May bind to short RNAs such as microRNAs (miRNAs) or short interfering RNAs (siRNAs), and represses the translation of mRNAs which are complementary to them. In Oryza sativa subsp. japonica (Rice), this protein is Protein argonaute 14 (AGO14).